A 386-amino-acid polypeptide reads, in one-letter code: Acetate kinase (386 aa).

Asn-7 provides a ligand contact to Mg(2+). Lys-14 contributes to the ATP binding site. Position 78 (Arg-78) interacts with substrate. Residue Asp-135 is the Proton donor/acceptor of the active site. ATP contacts are provided by residues 195-199, 268-270, and 316-320; these read HLGNG, DMR, and GIGEN. Residue Glu-370 participates in Mg(2+) binding.

The protein belongs to the acetokinase family. As to quaternary structure, homodimer. It depends on Mg(2+) as a cofactor. Mn(2+) is required as a cofactor.

The protein resides in the cytoplasm. It catalyses the reaction acetate + ATP = acetyl phosphate + ADP. Its pathway is metabolic intermediate biosynthesis; acetyl-CoA biosynthesis; acetyl-CoA from acetate: step 1/2. Catalyzes the formation of acetyl phosphate from acetate and ATP. Can also catalyze the reverse reaction. The sequence is that of Acetate kinase from Arthrobacter sp. (strain FB24).